A 92-amino-acid polypeptide reads, in one-letter code: Mediator-associated protein 3 (92 aa).

The 58-residue stretch at 13–70 (KDLRRKIKKTVKKILESSNLYKITEIKAREEASLKLDLDLSQDPYKVIVKEEVENFLE) folds into the DEK-C domain.

In terms of assembly, associated with the Mediator complex.

It is found in the nucleus. This Arabidopsis thaliana (Mouse-ear cress) protein is Mediator-associated protein 3.